We begin with the raw amino-acid sequence, 400 residues long: MDKSLFEQARPILEQIQDNGFEAYYVGGSVRDYVMGRNIHDIDITTSATPDEIESIFSHTIPVGKEHGTINVVFNNENYEVTTFRAEEDYVDHRRPSGVTFVRDLYEDLQRRDFTMNAIAMDTAYKLYDYFDGQQDINNRIIRTVGIAAERFQEDALRMIRCLRFQSQLSFEIATETFEAMRTQMADIKFLSIERIVIELTKLMRGINVEKSFNHLKSLKAFNYMPYFEHLDMNQINVTEPIDLELLIAIVSVKFDINYSLKPLKLSNRQVKDINQYIQIMNALPSIFTKEQLKIFVYDYDTNLIKNIMVAADVLKANDIQGHEPLIVNLQTIDETLHHLPMHNRKDMMVNGGVLMAHLNAKSGPWLKDVLRQIEIAIVTGKVSNEETEILKWVDNHVKI.

Residues G28 and R31 each contribute to the ATP site. G28 and R31 together coordinate CTP. Mg(2+)-binding residues include D41 and D43. ATP-binding residues include R112, D155, R158, R161, and R164. 5 residues coordinate CTP: R112, D155, R158, R161, and R164.

It belongs to the tRNA nucleotidyltransferase/poly(A) polymerase family. Bacterial CCA-adding enzyme type 3 subfamily. In terms of assembly, homodimer. Requires Mg(2+) as cofactor.

It carries out the reaction a tRNA precursor + 2 CTP + ATP = a tRNA with a 3' CCA end + 3 diphosphate. It catalyses the reaction a tRNA with a 3' CCA end + 2 CTP + ATP = a tRNA with a 3' CCACCA end + 3 diphosphate. In terms of biological role, catalyzes the addition and repair of the essential 3'-terminal CCA sequence in tRNAs without using a nucleic acid template. Adds these three nucleotides in the order of C, C, and A to the tRNA nucleotide-73, using CTP and ATP as substrates and producing inorganic pyrophosphate. tRNA 3'-terminal CCA addition is required both for tRNA processing and repair. Also involved in tRNA surveillance by mediating tandem CCA addition to generate a CCACCA at the 3' terminus of unstable tRNAs. While stable tRNAs receive only 3'-terminal CCA, unstable tRNAs are marked with CCACCA and rapidly degraded. This is CCA-adding enzyme from Staphylococcus aureus (strain bovine RF122 / ET3-1).